The primary structure comprises 1165 residues: Immunoglobulin superfamily member 3 (1165 aa).

The first 20 residues, 1–20 (MGTAAGLLLAALLLAGTSWA), serve as a signal peptide directing secretion. Topologically, residues 21-1095 (QREVNIQQGP…LQSTICANDA (1075 aa)) are extracellular. Ig-like C2-type domains follow at residues 22–139 (REVN…AKMN), 144–262 (PDTL…WFPL), 276–386 (PTDK…RGPS), 406–527 (PLRT…WQLL), 545–661 (FAVT…WTQL), 678–800 (PRLQ…EEAS), 810–934 (PDAN…WYKR), and 951–1067 (PALQ…WYLL). 2 cysteine pairs are disulfide-bonded: cysteine 43-cysteine 121 and cysteine 168-cysteine 246. Positions 250–252 (EWI) match the EWI motif motif. 6 cysteine pairs are disulfide-bonded: cysteine 302–cysteine 376, cysteine 432–cysteine 511, cysteine 566–cysteine 645, cysteine 701–cysteine 779, cysteine 835–cysteine 918, and cysteine 974–cysteine 1051. The chain crosses the membrane as a helical span at residues 1096–1116 (LFYLVFFYPFPIFGILIITIL). Residues 1117–1165 (LVRFRHRPTSKPGEGKNGVPLLWIKEPHLNYSPTCLEPPVLSIHPGTID) lie on the Cytoplasmic side of the membrane.

The protein localises to the membrane. The chain is Immunoglobulin superfamily member 3 (igsf3) from Xenopus laevis (African clawed frog).